Here is a 336-residue protein sequence, read N- to C-terminus: Histidinol-phosphate aminotransferase (336 aa).

Lys204 is modified (N6-(pyridoxal phosphate)lysine).

Belongs to the class-II pyridoxal-phosphate-dependent aminotransferase family. Histidinol-phosphate aminotransferase subfamily. Requires pyridoxal 5'-phosphate as cofactor.

It catalyses the reaction L-histidinol phosphate + 2-oxoglutarate = 3-(imidazol-4-yl)-2-oxopropyl phosphate + L-glutamate. It functions in the pathway amino-acid biosynthesis; L-histidine biosynthesis; L-histidine from 5-phospho-alpha-D-ribose 1-diphosphate: step 7/9. In Thermococcus kodakarensis (strain ATCC BAA-918 / JCM 12380 / KOD1) (Pyrococcus kodakaraensis (strain KOD1)), this protein is Histidinol-phosphate aminotransferase.